A 678-amino-acid chain; its full sequence is Glycine--tRNA ligase beta subunit (678 aa).

This sequence belongs to the class-II aminoacyl-tRNA synthetase family. In terms of assembly, tetramer of two alpha and two beta subunits.

The protein resides in the cytoplasm. It catalyses the reaction tRNA(Gly) + glycine + ATP = glycyl-tRNA(Gly) + AMP + diphosphate. The polypeptide is Glycine--tRNA ligase beta subunit (Streptococcus pneumoniae (strain P1031)).